The following is a 33-amino-acid chain: Pheromone biosynthesis-activating neuropeptide (33 aa).

The segment at 1-33 is disordered; the sequence is LADDMPATMADQEVYRPEPEQIDSRNKYFSPRL. Over residues 13–26 the composition is skewed to basic and acidic residues; that stretch reads EVYRPEPEQIDSRN. Leucine 33 carries the post-translational modification Leucine amide.

Belongs to the pyrokinin family.

It localises to the secreted. In terms of biological role, involved in the control of pheromone production in females. The chain is Pheromone biosynthesis-activating neuropeptide from Lymantria dispar (Gypsy moth).